The following is a 105-amino-acid chain: Small ribosomal subunit protein uS10 (105 aa).

This sequence belongs to the universal ribosomal protein uS10 family. Part of the 30S ribosomal subunit.

Functionally, involved in the binding of tRNA to the ribosomes. In Oleidesulfovibrio alaskensis (strain ATCC BAA-1058 / DSM 17464 / G20) (Desulfovibrio alaskensis), this protein is Small ribosomal subunit protein uS10.